A 157-amino-acid chain; its full sequence is DNA gyrase inhibitor (157 aa).

Belongs to the DNA gyrase inhibitor family. As to quaternary structure, interacts with DNA gyrase.

It localises to the cytoplasm. Inhibits the supercoiling activity of DNA gyrase. Acts by inhibiting DNA gyrase at an early step, prior to (or at the step of) binding of DNA by the gyrase. It protects cells against toxins that target DNA gyrase, by inhibiting activity of these toxins and reducing the formation of lethal double-strand breaks in the cell. This Enterobacter lignolyticus (strain SCF1) protein is DNA gyrase inhibitor.